A 502-amino-acid polypeptide reads, in one-letter code: UDP-N-acetylmuramate--L-alanine ligase (502 aa).

An ATP-binding site is contributed by 120 to 126 (GTHGKTS).

The protein belongs to the MurCDEF family.

The protein localises to the cytoplasm. The enzyme catalyses UDP-N-acetyl-alpha-D-muramate + L-alanine + ATP = UDP-N-acetyl-alpha-D-muramoyl-L-alanine + ADP + phosphate + H(+). Its pathway is cell wall biogenesis; peptidoglycan biosynthesis. Cell wall formation. The protein is UDP-N-acetylmuramate--L-alanine ligase of Rhodococcus erythropolis (strain PR4 / NBRC 100887).